The following is a 238-amino-acid chain: Leucyl/phenylalanyl-tRNA--protein transferase (238 aa).

This sequence belongs to the L/F-transferase family.

Its subcellular location is the cytoplasm. The enzyme catalyses N-terminal L-lysyl-[protein] + L-leucyl-tRNA(Leu) = N-terminal L-leucyl-L-lysyl-[protein] + tRNA(Leu) + H(+). It carries out the reaction N-terminal L-arginyl-[protein] + L-leucyl-tRNA(Leu) = N-terminal L-leucyl-L-arginyl-[protein] + tRNA(Leu) + H(+). It catalyses the reaction L-phenylalanyl-tRNA(Phe) + an N-terminal L-alpha-aminoacyl-[protein] = an N-terminal L-phenylalanyl-L-alpha-aminoacyl-[protein] + tRNA(Phe). Functions in the N-end rule pathway of protein degradation where it conjugates Leu, Phe and, less efficiently, Met from aminoacyl-tRNAs to the N-termini of proteins containing an N-terminal arginine or lysine. The chain is Leucyl/phenylalanyl-tRNA--protein transferase from Pseudoalteromonas translucida (strain TAC 125).